The chain runs to 453 residues: Alpha-2B adrenergic receptor (453 aa).

The Extracellular portion of the chain corresponds to 1 to 17 (MSGPAMVHQEPYSVQAT). The helical transmembrane segment at 18 to 42 (AAIASAITFLILFTIFGNALVILAV) threads the bilayer. The Cytoplasmic portion of the chain corresponds to 43–54 (LTSRSLRAPQNL). The chain crosses the membrane as a helical span at residues 55–80 (FLVSLAAADILVATLIIPFSLANELL). At 81–90 (GYWYFWRAWC) the chain is on the extracellular side. A disulfide bond links Cys90 and Cys169. A helical transmembrane segment spans residues 91 to 113 (EVYLALDVLFCTSSIVHLCAISL). The Cytoplasmic segment spans residues 114–135 (DRYWAVSRALEYNSKRTPRRIK). The helical transmembrane segment at 136–158 (CIILTVWLIAAVISLPPLIYKGD) threads the bilayer. Topologically, residues 159–174 (QRPEPHGLPQCELNQE) are extracellular. Residues 175 to 198 (AWYILASSIGSFFAPCLIMILVYL) form a helical membrane-spanning segment. At 199 to 375 (RIYVIAKRSH…LSREKRFTFV (177 aa)) the chain is on the cytoplasmic side. A disordered region spans residues 214 to 329 (AKRGSGEGES…ASPASVFNPP (116 aa)). A compositionally biased stretch (acidic residues) spans 303-314 (AEEDEEEVEECE). The chain crosses the membrane as a helical span at residues 376–399 (LAVVIGVFVVCWFPFFFSYSLGAI). The Extracellular segment spans residues 400-408 (CPQHCKVPH). The chain crosses the membrane as a helical span at residues 409–432 (GLFQFFFWIGYCNSSLNPVIYTIF). Over 433–453 (NQDFRRAFRRILCRQWTQTGW) the chain is Cytoplasmic. A lipid anchor (S-palmitoyl cysteine) is attached at Cys445.

This sequence belongs to the G-protein coupled receptor 1 family. Adrenergic receptor subfamily. ADRA2B sub-subfamily. As to quaternary structure, interacts with RAB26. Interacts with PPP1R9B. Interacts with GGA1, GGA2 and GGA3.

It localises to the cell membrane. Functionally, alpha-2 adrenergic receptors mediate the catecholamine-induced inhibition of adenylate cyclase through the action of G proteins. This is Alpha-2B adrenergic receptor (Adra2b) from Mus musculus (Mouse).